The chain runs to 433 residues: Serine carboxypeptidase-like 11 (433 aa).

The N-terminal stretch at 1 to 21 is a signal peptide; that stretch reads MELTLKLLVLLLFILNHHVGS. Intrachain disulfides connect Cys80/Cys322, Cys243/Cys257, and Cys281/Cys288. N-linked (GlcNAc...) asparagine glycosylation occurs at Asn101. The active site involves Ser176. The N-linked (GlcNAc...) asparagine glycan is linked to Asn342. Residue Asp358 is part of the active site. An N-linked (GlcNAc...) asparagine glycan is attached at Asn374. Residue His411 is part of the active site.

It belongs to the peptidase S10 family. In terms of tissue distribution, ubiquitous.

The protein resides in the secreted. Probable carboxypeptidase. The sequence is that of Serine carboxypeptidase-like 11 (SCPL11) from Arabidopsis thaliana (Mouse-ear cress).